The primary structure comprises 395 residues: Probable nitrate/nitrite transporter NarK2 (395 aa).

12 helical membrane passes run 8–28 (LVLATWISVVNFWAWNLIGPL), 45–65 (LLVATPILVGALGRIVTGPLT), 72–92 (AMLIAVTLASILPVLAVGVAA), 98–118 (ALLVFFGLFLGVAGTIFAVGI), 131–151 (GFSTGVFGMGMVGTALSAFFT), 157–177 (WFGLFTTHAIVAAALASTAVV), 205–225 (LPVTWEMSFLYAIVFGGFVAF), 244–266 (AGARTAGFALAAVLARPVGGWLS), 274–294 (VVLASLAGTALLAFAAALQPP), 301–321 (ATFITLAVCLGVGTGGVFAWV), 333–353 (VTGIVAAAGGLGGYFPPLVMG), and 365–385 (VGLLLLVATALVACTYTALHA).

It belongs to the major facilitator superfamily. Nitrate/nitrite porter (TC 2.A.1.8) family.

The protein resides in the cell membrane. In terms of biological role, involved in excretion of nitrite produced by the dissimilatory reduction of nitrate. The protein is Probable nitrate/nitrite transporter NarK2 (narK2) of Mycobacterium tuberculosis (strain CDC 1551 / Oshkosh).